The following is a 718-amino-acid chain: Protein Smaug homolog 1 (718 aa).

Residue Ser-168 is modified to Phosphoserine. Disordered regions lie at residues 278–323 (ARGP…EEGS), 416–474 (KAYS…LQPH), and 572–601 (NRGFGQSNSLPTAGSVGGGMGRRNPRQYQI). The region spanning 323–391 (SGMKDVPAWL…ERQNLLKSLE (69 aa)) is the SAM domain. At Ser-420 the chain carries Phosphoserine. Position 424 is a phosphothreonine (Thr-424). Residues 453–466 (GAAATGATATPSAG) show a composition bias toward low complexity. An Omega-N-methylarginine modification is found at Arg-573. At Ser-580 the chain carries Phosphoserine.

Belongs to the SMAUG family.

It localises to the cytoplasm. The protein localises to the cell projection. Its subcellular location is the dendrite. The protein resides in the synapse. It is found in the synaptosome. Functionally, acts as a translational repressor of SRE-containing messengers. The polypeptide is Protein Smaug homolog 1 (SAMD4A) (Homo sapiens (Human)).